We begin with the raw amino-acid sequence, 305 residues long: MEIKDGFIIINKEKGYTSHDCVQQIRKLLGTKKVGHTGTLDPGVTGTLPIAIGSATRFIQYLPQGKTYIGQIQLGIRTKTDDIQGEIINKKEWPILSNAQLDKFLNKFRGIIQQIPPKVSSVHVNGERAYKKFFKNEEFELKPREVKIEELVLKKWDQINGILEIKISCSTGTYIRSIARDLGGVLDSEGCLLNLKRISACGFHEKNSIKISDLVNLNKNCSTFIIPTIYALDHISTLILNNQEEINFWETGRLIKLDEENLIKSSKFDYKKPIKIINNQKMLLGIGFINEDKNKLHPKLVLNAK.

The active-site Nucleophile is the D41.

Belongs to the pseudouridine synthase TruB family. Type 1 subfamily.

The enzyme catalyses uridine(55) in tRNA = pseudouridine(55) in tRNA. Responsible for synthesis of pseudouridine from uracil-55 in the psi GC loop of transfer RNAs. The chain is tRNA pseudouridine synthase B from Prochlorococcus marinus (strain MIT 9515).